A 373-amino-acid chain; its full sequence is Thyroid hormone receptor beta (373 aa).

The tract at residues Met-1 to Leu-18 is modulating. Zn(2+)-binding residues include Cys-19, Cys-22, Cys-36, Cys-39, Cys-57, Cys-63, Cys-73, and Cys-76. 2 consecutive NR C4-type zinc fingers follow at residues Cys-19–Cys-39 and Cys-57–Cys-81. Residues Cys-19 to Asp-93 constitute a DNA-binding region (nuclear receptor). Positions Glu-129–Asp-373 constitute an NR LBD domain. Positions 194, 243, and 347 each coordinate 3,3',5-triiodo-L-thyronine. Positions 194, 243, and 347 each coordinate L-thyroxine.

The protein belongs to the nuclear hormone receptor family. NR1 subfamily.

It is found in the nucleus. Functionally, nuclear hormone receptor that can act as a repressor or activator of transcription. High affinity receptor for thyroid hormones, including triiodothyronine and thyroxine. This Aquarana catesbeiana (American bullfrog) protein is Thyroid hormone receptor beta (thrb).